Reading from the N-terminus, the 217-residue chain is RING-H2 finger protein ATL40 (217 aa).

The chain crosses the membrane as a helical span at residues 28 to 48; that stretch reads IFLVTTVSFSIIIIIVFVYYL. An RING-type; atypical zinc finger spans residues 100–142; the sequence is CAVCLSLLEEKDNARMLPNCKHVFHVSCVDTWLTTQSTCPVCR. 2 stretches are compositionally biased toward basic and acidic residues: residues 143–160 and 186–217; these read TEAE…REGP and DSFR…IERQ. The disordered stretch occupies residues 143–217; sequence TEAEPSHPRL…QDRELDIERQ (75 aa).

Belongs to the RING-type zinc finger family. ATL subfamily.

The protein resides in the membrane. The enzyme catalyses S-ubiquitinyl-[E2 ubiquitin-conjugating enzyme]-L-cysteine + [acceptor protein]-L-lysine = [E2 ubiquitin-conjugating enzyme]-L-cysteine + N(6)-ubiquitinyl-[acceptor protein]-L-lysine.. The protein operates within protein modification; protein ubiquitination. This is RING-H2 finger protein ATL40 (ATL40) from Arabidopsis thaliana (Mouse-ear cress).